A 314-amino-acid chain; its full sequence is MEDKRNIQIIEWEHLDKKKFYVFGVAMTMMIRVSVYPFTLIRTRLQVQKGKSLYHGTFDAFIKILRADGITGLYRGFLVNTFTLISGQCYVTTYELTRKFVADYSQSNTVKSLVAGGSASLVAQSITVPIDVVSQHLMMQRKGEKMGRFQVRGNPEGQGVVAFGQTKDIIRQILQADGLRGFYRGYVASLLTYIPNSAVWWPFYHFYAEQLSYLCPKECPHIVFQAVSGPLAAATASILTNPMDVIRTRVQVEGKNSIILTFRQLMAEEGPWGLMKGLSARIISATPSTIVIVVGYESLKKLSLRPELVDSRHW.

3 Solcar repeats span residues lysine 18–phenylalanine 100, serine 107–glutamine 210, and proline 220–leucine 302. A run of 6 helical transmembrane segments spans residues phenylalanine 20–arginine 42, threonine 71–tyrosine 90, leucine 113–valine 133, glycine 185–tryptophan 201, isoleucine 222–leucine 239, and leucine 278–tyrosine 296.

It belongs to the mitochondrial carrier (TC 2.A.29) family.

It is found in the mitochondrion membrane. The enzyme catalyses L-valine(in) = L-valine(out). It carries out the reaction L-leucine(in) = L-leucine(out). Mitochondrial solute transporter which transports branched-chain amino acid (BCAA; valine, leucine and isoleucine) into mitochondria in brown adipose tissue (BAT). BAT is involved in BCAA catabolism and actively utilizes BCAA in the mitochondria for thermogenesis. This is Solute carrier family 25 member 44 from Homo sapiens (Human).